The following is a 415-amino-acid chain: Tyrosine--tRNA ligase (415 aa).

The short motif at 54–63 (PTGSNIHLGH) is the 'HIGH' region element. The short motif at 248-252 (KMSKT) is the 'KMSKS' region element. Lysine 251 is a binding site for ATP. Positions 351-415 (AKAFYLMSAV…GKKTFRRLTA (65 aa)) constitute an S4 RNA-binding domain.

Belongs to the class-I aminoacyl-tRNA synthetase family. TyrS type 2 subfamily. Homodimer.

Its subcellular location is the cytoplasm. The enzyme catalyses tRNA(Tyr) + L-tyrosine + ATP = L-tyrosyl-tRNA(Tyr) + AMP + diphosphate + H(+). Catalyzes the attachment of tyrosine to tRNA(Tyr) in a two-step reaction: tyrosine is first activated by ATP to form Tyr-AMP and then transferred to the acceptor end of tRNA(Tyr). The sequence is that of Tyrosine--tRNA ligase from Synechococcus sp. (strain CC9902).